Reading from the N-terminus, the 462-residue chain is Light-independent protochlorophyllide reductase subunit N (462 aa).

[4Fe-4S] cluster contacts are provided by Cys24, Cys49, and Cys109.

The protein belongs to the BchN/ChlN family. As to quaternary structure, protochlorophyllide reductase is composed of three subunits; ChlL, ChlN and ChlB. Forms a heterotetramer of two ChlB and two ChlN subunits. Requires [4Fe-4S] cluster as cofactor.

It is found in the plastid. Its subcellular location is the chloroplast. It carries out the reaction chlorophyllide a + oxidized 2[4Fe-4S]-[ferredoxin] + 2 ADP + 2 phosphate = protochlorophyllide a + reduced 2[4Fe-4S]-[ferredoxin] + 2 ATP + 2 H2O. The protein operates within porphyrin-containing compound metabolism; chlorophyll biosynthesis (light-independent). In terms of biological role, component of the dark-operative protochlorophyllide reductase (DPOR) that uses Mg-ATP and reduced ferredoxin to reduce ring D of protochlorophyllide (Pchlide) to form chlorophyllide a (Chlide). This reaction is light-independent. The NB-protein (ChlN-ChlB) is the catalytic component of the complex. The chain is Light-independent protochlorophyllide reductase subunit N from Pleurastrum terricola (Filamentous green alga).